The following is an 84-amino-acid chain: ORF8b protein (84 aa).

Residues 1–82 (MCLKILVRYN…RDVLVVLNKR (82 aa)) form the SARS ORF8 Ig-like domain. An intrachain disulfide couples Cys22 to Cys40.

Its subcellular location is the host cytoplasm. It localises to the host nucleus. Non-structural protein which is dispensable for virus replication in cell culture. The chain is ORF8b protein from Severe acute respiratory syndrome coronavirus (SARS-CoV).